A 419-amino-acid polypeptide reads, in one-letter code: MSRPPWKSPLCEMVQPSGSPAGDQDMLGEESSLGKPAMLHVPSEQGTPETFQRCLEENQELRDAIRQSNQMLRERCEELQHFQGNQREEKAFLMQKFQEARDLVVRLSLEKRELRQQREQALKEVERLKTCQQQMAEDKASVKAQVTSLLGELQESQSRLEAATKERQALESRARVASEKARQLESEREALEQRHSVQVDQLVLQNESMEAALRMERQAASEEKRKLAQLQVAYHQLFQEYDNHMKSSMVSSERNRGLQLEDLKQQLQQAEEALVAKQEVIDKLKEEAEQHKIVMETVPVLKAQADIYKADFQAERQAREKLAEKKEFLQEQLEQLQREYSRLKTSCQESARIEDMRKRHVEVSQPPLAPGPAHHSFHLNPSSQRRSPPDEPPKFCCPKCQYQAPDIDTLQIHVMECIE.

A disordered region spans residues 1-48 (MSRPPWKSPLCEMVQPSGSPAGDQDMLGEESSLGKPAMLHVPSEQGTP). The tract at residues 1-197 (MSRPPWKSPL…REALEQRHSV (197 aa)) is required for interaction with and ubiquitination by MARCHF2. Phosphoserine; by IKKB occurs at positions 31 and 43. The interaction with CHUK/IKBKB stretch occupies residues 44–111 (EQGTPETFQR…DLVVRLSLEK (68 aa)). The stretch at 49-353 (ETFQRCLEEN…KTSCQESARI (305 aa)) forms a coiled coil. Phosphoserine is present on Ser68. Residues Lys111, Lys139, Lys143, Lys226, Lys246, and Lys264 each participate in a glycyl lysine isopeptide (Lys-Gly) (interchain with G-Cter in ubiquitin) cross-link. The segment at 150-257 (LGELQESQSR…SMVSSERNRG (108 aa)) is interaction with TANK. The segment at 242 to 350 (DNHMKSSMVS…SRLKTSCQES (109 aa)) is ubiquitin-binding (UBAN). Positions 246–365 (KSSMVSSERN…MRKRHVEVSQ (120 aa)) are self-association. Residues 251 to 419 (SSERNRGLQL…LQIHVMECIE (169 aa)) are required for interaction with TNFAIP3. Lys277 is covalently cross-linked (Glycyl lysine isopeptide (Lys-Gly) (interchain with G-Cter in SUMO); alternate). Lys277 participates in a covalent cross-link: Glycyl lysine isopeptide (Lys-Gly) (interchain with G-Cter in ubiquitin); alternate. Glycyl lysine isopeptide (Lys-Gly) (interchain with G-Cter in ubiquitin) cross-links involve residues Lys283, Lys285, Lys292, and Lys302. Lys309 participates in a covalent cross-link: Glycyl lysine isopeptide (Lys-Gly) (interchain with G-Cter in SUMO); alternate. Residue Lys309 forms a Glycyl lysine isopeptide (Lys-Gly) (interchain with G-Cter in ubiquitin); alternate linkage. Residues Lys321, Lys325, and Lys326 each participate in a glycyl lysine isopeptide (Lys-Gly) (interchain with G-Cter in ubiquitin) cross-link. A leucine-zipper region spans residues 322–343 (LAEKKEFLQEQLEQLQREYSRL). Residues 356–394 (MRKRHVEVSQPPLAPGPAHHSFHLNPSSQRRSPPDEPPK) form a disordered region. Residue Ser376 is modified to Phosphoserine; by IKKB. The interaction with CYLD stretch occupies residues 382-419 (SSQRRSPPDEPPKFCCPKCQYQAPDIDTLQIHVMECIE). Ser387 bears the Phosphoserine mark. The CCHC NOA-type zinc-finger motif lies at 389–419 (PDEPPKFCCPKCQYQAPDIDTLQIHVMECIE). Cys397 lines the Zn(2+) pocket. Lys399 participates in a covalent cross-link: Glycyl lysine isopeptide (Lys-Gly) (interchain with G-Cter in ubiquitin). Positions 400, 413, and 417 each coordinate Zn(2+).

As to quaternary structure, homodimer; disulfide-linked. Component of the I-kappa-B-kinase (IKK) core complex consisting of CHUK, IKBKB and IKBKG; probably four alpha/CHUK-beta/IKBKB dimers are associated with four gamma/IKBKG subunits. The IKK core complex seems to associate with regulatory or adapter proteins to form a IKK-signalosome holo-complex. The IKK complex associates with TERF2IP/RAP1, leading to promote IKK-mediated phosphorylation of RELA/p65. Part of a complex composed of NCOA2, NCOA3, CHUK/IKKA, IKBKB, IKBKG and CREBBP. Interacts with COPS3, CYLD, NALP2, TRPC4AP and PIDD1. Interacts with ATM; the complex is exported from the nucleus. Interacts with TRAF6. Interacts with IKBKE. Interacts with TANK; the interaction is enhanced by IKBKE and TBK1. Part of a ternary complex consisting of TANK, IKBKB and IKBKG. Interacts with ZFAND5. Interacts with RIPK2. Interacts with TNIP1 and TNFAIP3; TNIP1 facilitates the TNFAIP3-mediated de-ubiquitination of IKBKG. Interacts with TNFAIP3; the interaction is induced by TNF stimulation and by polyubiquitin. Binds (via UBAN region) polyubiquitin; binds both 'Lys-63'-linked and linear polyubiquitin, with higher affinity for linear ubiquitin. Interacts with NLRP10. Interacts with TANK; this interaction increases in response to DNA damage. Interacts with USP10; this interaction increases in response to DNA damage. Interacts with ZC3H12A; this interaction increases in response to DNA damage. Interacts with IFIT5; the interaction synergizes the recruitment of IKK to MAP3K7 and enhances IKK phosphorylation. Interacts with TRIM29; this interaction induces IKBKG/NEMO ubiquitination and proteolytic degradation. Interacts with TRIM13; this interaction leads to IKBKG/NEMO ubiquitination. Interacts with ARFIP2. Interacts with RIPK1. Interacts with (ubiquitinated) BCL10; interaction with polyubiquitinated BCL10 via both 'Lys-63'-linked and linear ubiquitin is required for TCR-induced NF-kappa-B activation. Interacts with MARCHF2; during the late stages of macrophage viral and bacterial infection; the interaction leads to ubiquitination and degradation of IKBKG/NEMO. In terms of processing, phosphorylation at Ser-68 attenuates aminoterminal homodimerization. Polyubiquitinated on Lys-285 through 'Lys-63'; the ubiquitination is mediated downstream of NOD2 and RIPK2 and probably plays a role in signaling by facilitating interactions with ubiquitin domain-containing proteins and activates the NF-kappa-B pathway. Polyubiquitinated on Lys-399 through 'Lys-63'; the ubiquitination is mediated by BCL10, MALT1 and TRAF6 and probably plays a role in signaling by facilitating interactions with ubiquitin domain-containing proteins and activates the NF-kappa-B pathway. Monoubiquitinated on Lys-277 and Lys-309; promotes nuclear export. Polyubiquitinated through 'Lys-27' by TRIM23; involved in antiviral innate and inflammatory responses. Linear polyubiquitinated on Lys-111, Lys-143, Lys-226, Lys-246, Lys-264, Lys-277, Lys-285, Lys-292, Lys-302, Lys-309 and Lys-326; the head-to-tail polyubiquitination is mediated by the LUBAC complex and plays a key role in NF-kappa-B activation. Deubiquitinated by USP10 in a TANK-dependent and -independent manner, leading to the negative regulation of NF-kappa-B signaling upon DNA damage. Ubiquitinated at Lys-326 by MARCHF2 following bacterial and viral infection which leads to its degradation. Polyubiquitinated via 'Lys-29'-linked ubiquitin; leading to lysosomal degradation. Post-translationally, sumoylated on Lys-277 and Lys-309 with SUMO1. In terms of processing, neddylated by TRIM40, resulting in stabilization of NFKBIA and down-regulation of NF-kappa-B activity.

It is found in the cytoplasm. Its subcellular location is the nucleus. Regulatory subunit of the IKK core complex which phosphorylates inhibitors of NF-kappa-B thus leading to the dissociation of the inhibitor/NF-kappa-B complex and ultimately the degradation of the inhibitor. Its binding to scaffolding polyubiquitin plays a key role in IKK activation by multiple signaling receptor pathways. Can recognize and bind both 'Lys-63'-linked and linear polyubiquitin upon cell stimulation, with a much highr affinity for linear polyubiquitin. Could be implicated in NF-kappa-B-mediated protection from cytokine toxicity. Essential for viral activation of IRF3. Involved in TLR3- and IFIH1-mediated antiviral innate response; this function requires 'Lys-27'-linked polyubiquitination. This Bos taurus (Bovine) protein is NF-kappa-B essential modulator (IKBKG).